An 861-amino-acid chain; its full sequence is Replication factor C subunit 1 (861 aa).

A disordered region spans residues 1-103; the sequence is MVNISDFFGK…SSKSSDSASN (103 aa). The span at 16 to 28 shows a compositional bias: polar residues; that stretch reads RSSTSRPTRQVGS. Position 38 is a phosphothreonine (T38). S40 is modified (phosphoserine). Phosphothreonine is present on T63. The BRCT domain occupies 153–243; sequence GKPNCLLGLT…PAEGGDGEAA (91 aa). Residues T299, C311, 353–361, and N456 each bind ATP; that span reads GPPGIGKTT. Residues 788-861 are disordered; the sequence is STIGGGGVGT…GGSKKRKTKA (74 aa). Over residues 803-823 the composition is skewed to acidic residues; that stretch reads DFEDVVDADDNPVPADDEETQ. 2 consecutive short sequence motifs (nuclear localization signal) follow at residues 830 to 834 and 855 to 860; these read KKDKL and KKRKTK. A compositionally biased stretch (basic residues) spans 836–861; sequence KQKAKPTKRKTATSKPGGSKKRKTKA.

Belongs to the activator 1 large subunit family. In terms of assembly, replication factor C (RFC) is a heteropentamer of subunits RFC1, RFC2, RFC3, RFC4 and RFC5 and forms a complex with POL30/PCNA in the presence of ATP. Interacts with ECO1 and POL30/PCNA.

It localises to the nucleus. Its function is as follows. Component of the ATP-dependent clamp loader RFC complex for the POL30/PCNA homotrimer DNA clamp. During a clamp loading circle, the RFC:clamp complex binds to DNA and the recognition of the double-stranded/single-stranded junction stimulates ATP hydrolysis by RFC. The complex presumably provides bipartite ATP sites in which one subunit supplies a catalytic site for hydrolysis of ATP bound to the neighboring subunit. Dissociation of RFC from the clamp leaves the clamp encircling DNA. Replication factor C (RFC or activator 1) complex acts during elongation of primed DNA templates by DNA polymerase delta and epsilon. RFC has an essential but redundant activity in sister chromatid cohesion establishment. The protein is Replication factor C subunit 1 (RFC1) of Saccharomyces cerevisiae (strain ATCC 204508 / S288c) (Baker's yeast).